Reading from the N-terminus, the 299-residue chain is CRISPR-associated endonuclease Cas1 3 (299 aa).

Residues Glu-143, His-210, and Asp-223 each contribute to the Mn(2+) site.

Belongs to the CRISPR-associated endonuclease Cas1 family. As to quaternary structure, homodimer, forms a heterotetramer with a Cas2 homodimer. Mg(2+) is required as a cofactor. Mn(2+) serves as cofactor.

Its function is as follows. CRISPR (clustered regularly interspaced short palindromic repeat), is an adaptive immune system that provides protection against mobile genetic elements (viruses, transposable elements and conjugative plasmids). CRISPR clusters contain spacers, sequences complementary to antecedent mobile elements, and target invading nucleic acids. CRISPR clusters are transcribed and processed into CRISPR RNA (crRNA). Acts as a dsDNA endonuclease. Involved in the integration of spacer DNA into the CRISPR cassette. This is CRISPR-associated endonuclease Cas1 3 from Methanospirillum hungatei JF-1 (strain ATCC 27890 / DSM 864 / NBRC 100397 / JF-1).